We begin with the raw amino-acid sequence, 433 residues long: MALESLKEVARKIAGSSSIDKKFVEEMVKEIQRALIKADVNVRQVKEISDAIKKRALSEDVLPALNAKEQILKIVYEELLRGVGEGLEIPLKKAKIMLVGLQGSGKTTTTAKMAKYFKDRGMKVAVVAADTWRPAAYEQLRQLAEEYGITFYGEKGEKDAVKIVKNALEKLKDHDMIIIDTAGRHALEDELIDEMIKIAEVARPDYKLLVLDAAIGQLASKQAQAFHEAIGINGIIITKFDGTAKGGGALSAARQIGIPIAFIGTGEKVEDFERFDPAGFVSRLLGMGDIKALMEKIERIASEEELDPEAFLKGTFTLKDIYKQIEAMNKMGPVRKIFEMLPFGLGLKVDNDVMEMTQEKMKKFRVIMDSMTEEELLNPKIIDSSRIRRIAIGSGTSPQEVKELLNYYKTMKNLMKKMKKNKLPIKGLGKLGF.

Residues 100 to 107, 180 to 184, and 238 to 241 contribute to the GTP site; these read GLQGSGKT, DTAGR, and TKFD.

It belongs to the GTP-binding SRP family. SRP54 subfamily. Part of the signal recognition particle protein translocation system, which is composed of SRP and FtsY. Archaeal SRP consists of a 7S RNA molecule of 300 nucleotides and two protein subunits: SRP54 and SRP19.

It localises to the cytoplasm. The enzyme catalyses GTP + H2O = GDP + phosphate + H(+). In terms of biological role, involved in targeting and insertion of nascent membrane proteins into the cytoplasmic membrane. Binds to the hydrophobic signal sequence of the ribosome-nascent chain (RNC) as it emerges from the ribosomes. The SRP-RNC complex is then targeted to the cytoplasmic membrane where it interacts with the SRP receptor FtsY. This is Signal recognition particle 54 kDa protein from Archaeoglobus fulgidus (strain ATCC 49558 / DSM 4304 / JCM 9628 / NBRC 100126 / VC-16).